Consider the following 144-residue polypeptide: 3-hydroxyacyl-[acyl-carrier-protein] dehydratase FabZ (144 aa).

Histidine 48 is a catalytic residue.

It belongs to the thioester dehydratase family. FabZ subfamily.

It localises to the cytoplasm. It carries out the reaction a (3R)-hydroxyacyl-[ACP] = a (2E)-enoyl-[ACP] + H2O. Functionally, involved in unsaturated fatty acids biosynthesis. Catalyzes the dehydration of short chain beta-hydroxyacyl-ACPs and long chain saturated and unsaturated beta-hydroxyacyl-ACPs. The chain is 3-hydroxyacyl-[acyl-carrier-protein] dehydratase FabZ from Bacillus anthracis (strain A0248).